Consider the following 514-residue polypeptide: Endoglucanase MaCel5A (514 aa).

A signal peptide spans 1 to 23 (MKRILFTAGGCLFYLLLAVKAYA). 2 stretches are compositionally biased toward low complexity: residues 91-114 (GSSS…SGSG) and 179-201 (SSSS…SSSG). Disordered stretches follow at residues 91–118 (GSSS…SSSG) and 179–208 (SSSS…GGDS). Glutamate 346 serves as the catalytic Proton donor. Glutamate 439 acts as the Nucleophile in catalysis.

This sequence belongs to the glycosyl hydrolase 5 (cellulase A) family.

The enzyme catalyses Endohydrolysis of (1-&gt;4)-beta-D-glucosidic linkages in cellulose, lichenin and cereal beta-D-glucans.. Exhibits strong halostability and halotolerance. The activity increases about tenfold in the presence of 0.5 M NaCl, and about fivefold in the presence of 4.0 M NaCl. Tolerates detergents, but activity is decreased in the presence of EDTA. Activity is enhanced in the presence of Mn(2+), Ca(2+), Ba(2+) or Mg(2+), and decreased in the presence of Zn(2+), Cu(2+), Al(3+) or Fe(3+). In terms of biological role, endoglucanase that exhibits highest activity toward barley beta-glucan, lower activity toward carboxymethyl cellulose (CMC-Na), and marginal activity toward laminarin and xylan. The sequence is that of Endoglucanase MaCel5A from Microbulbifer sp. (strain ALW1).